The primary structure comprises 717 residues: Polyribonucleotide nucleotidyltransferase (717 aa).

Residues Asp488 and Asp494 each contribute to the Mg(2+) site. In terms of domain architecture, KH spans 555-614 (PRIEVMNIPVDKIREVIGSGGKVIREIVEKTGAKINIEDDGTVKIASSSGKEIEAARKWI). Residues 624-692 (GQIYEGTVVK…ERGKVRLSMK (69 aa)) enclose the S1 motif domain.

This sequence belongs to the polyribonucleotide nucleotidyltransferase family. Mg(2+) is required as a cofactor.

It is found in the cytoplasm. The enzyme catalyses RNA(n+1) + phosphate = RNA(n) + a ribonucleoside 5'-diphosphate. In terms of biological role, involved in mRNA degradation. Catalyzes the phosphorolysis of single-stranded polyribonucleotides processively in the 3'- to 5'-direction. In Sinorhizobium fredii (strain NBRC 101917 / NGR234), this protein is Polyribonucleotide nucleotidyltransferase.